The primary structure comprises 85 residues: Acylphosphatase (85 aa).

The Acylphosphatase-like domain maps to 3 to 85; that stretch reads AARFVVSGVV…PARFRRLKTL (83 aa). Catalysis depends on residues R18 and N36. The tract at residues 66-85 is disordered; sequence PPRSRRSRARPARFRRLKTL.

The protein belongs to the acylphosphatase family.

It catalyses the reaction an acyl phosphate + H2O = a carboxylate + phosphate + H(+). This chain is Acylphosphatase (acyP), found in Xanthomonas axonopodis pv. citri (strain 306).